The primary structure comprises 398 residues: Elongation factor Tu (398 aa).

One can recognise a tr-type G domain in the interval 10 to 207; sequence KPHVNIGTIG…TVDEYIPEPE (198 aa). Positions 19 to 26 are G1; that stretch reads GHVDHGKT. 19–26 contacts GTP; it reads GHVDHGKT. Residue Thr26 coordinates Mg(2+). A G2 region spans residues 63 to 67; it reads GITIN. The G3 stretch occupies residues 84–87; sequence DAPG. GTP contacts are provided by residues 84-88 and 139-142; these read DAPGH and NKVD. A G4 region spans residues 139–142; it reads NKVD. Residues 177–179 are G5; that stretch reads SAL.

This sequence belongs to the TRAFAC class translation factor GTPase superfamily. Classic translation factor GTPase family. EF-Tu/EF-1A subfamily. In terms of assembly, monomer.

The protein localises to the cytoplasm. It catalyses the reaction GTP + H2O = GDP + phosphate + H(+). Functionally, GTP hydrolase that promotes the GTP-dependent binding of aminoacyl-tRNA to the A-site of ribosomes during protein biosynthesis. The chain is Elongation factor Tu from Streptococcus sanguinis (strain SK36).